The sequence spans 226 residues: Endonuclease V (226 aa).

D42 and D110 together coordinate Mg(2+).

It belongs to the endonuclease V family. It depends on Mg(2+) as a cofactor.

It is found in the cytoplasm. The catalysed reaction is Endonucleolytic cleavage at apurinic or apyrimidinic sites to products with a 5'-phosphate.. Its function is as follows. DNA repair enzyme involved in the repair of deaminated bases. Selectively cleaves double-stranded DNA at the second phosphodiester bond 3' to a deoxyinosine leaving behind the intact lesion on the nicked DNA. The polypeptide is Endonuclease V (Thermus thermophilus (strain ATCC BAA-163 / DSM 7039 / HB27)).